The primary structure comprises 305 residues: tRNA uridine(34) hydroxylase (305 aa).

The region spanning A125–S219 is the Rhodanese domain. The active-site Cysteine persulfide intermediate is C179.

This sequence belongs to the TrhO family.

It catalyses the reaction uridine(34) in tRNA + AH2 + O2 = 5-hydroxyuridine(34) in tRNA + A + H2O. Catalyzes oxygen-dependent 5-hydroxyuridine (ho5U) modification at position 34 in tRNAs. In Brucella anthropi (strain ATCC 49188 / DSM 6882 / CCUG 24695 / JCM 21032 / LMG 3331 / NBRC 15819 / NCTC 12168 / Alc 37) (Ochrobactrum anthropi), this protein is tRNA uridine(34) hydroxylase.